A 78-amino-acid chain; its full sequence is UPF0270 protein PC1_3850 (78 aa).

This sequence belongs to the UPF0270 family.

This chain is UPF0270 protein PC1_3850, found in Pectobacterium carotovorum subsp. carotovorum (strain PC1).